The chain runs to 228 residues: Putative N-acetylmannosamine-6-phosphate 2-epimerase (228 aa).

This sequence belongs to the NanE family.

The catalysed reaction is an N-acyl-D-glucosamine 6-phosphate = an N-acyl-D-mannosamine 6-phosphate. It functions in the pathway amino-sugar metabolism; N-acetylneuraminate degradation; D-fructose 6-phosphate from N-acetylneuraminate: step 3/5. Converts N-acetylmannosamine-6-phosphate (ManNAc-6-P) to N-acetylglucosamine-6-phosphate (GlcNAc-6-P). In Mycoplasmopsis pulmonis (strain UAB CTIP) (Mycoplasma pulmonis), this protein is Putative N-acetylmannosamine-6-phosphate 2-epimerase.